The following is a 454-amino-acid chain: Bifunctional protein GlmU (454 aa).

The segment at 1–226 is pyrophosphorylase; sequence MSTTVIILAA…AFEVEGVNDR (226 aa). Residues 8–11, lysine 22, glutamine 73, 78–79, 100–102, glycine 137, glutamate 151, asparagine 166, and asparagine 224 each bind UDP-N-acetyl-alpha-D-glucosamine; these read LAAG, GT, and YGD. A Mg(2+)-binding site is contributed by aspartate 102. Asparagine 224 is a Mg(2+) binding site. Positions 227-247 are linker; that stretch reads LQLAALEREFQKQQAKELMQQ. Residues 248–454 are N-acetyltransferase; that stretch reads GVTFADPARF…NYQRPQKLKK (207 aa). The UDP-N-acetyl-alpha-D-glucosamine site is built by arginine 330 and lysine 348. Residue histidine 360 is the Proton acceptor of the active site. 2 residues coordinate UDP-N-acetyl-alpha-D-glucosamine: tyrosine 363 and asparagine 374. Acetyl-CoA-binding positions include alanine 377, 383–384, serine 402, alanine 420, and arginine 437; that span reads NY.

The protein in the N-terminal section; belongs to the N-acetylglucosamine-1-phosphate uridyltransferase family. It in the C-terminal section; belongs to the transferase hexapeptide repeat family. Homotrimer. The cofactor is Mg(2+).

The protein localises to the cytoplasm. The catalysed reaction is alpha-D-glucosamine 1-phosphate + acetyl-CoA = N-acetyl-alpha-D-glucosamine 1-phosphate + CoA + H(+). The enzyme catalyses N-acetyl-alpha-D-glucosamine 1-phosphate + UTP + H(+) = UDP-N-acetyl-alpha-D-glucosamine + diphosphate. It functions in the pathway nucleotide-sugar biosynthesis; UDP-N-acetyl-alpha-D-glucosamine biosynthesis; N-acetyl-alpha-D-glucosamine 1-phosphate from alpha-D-glucosamine 6-phosphate (route II): step 2/2. The protein operates within nucleotide-sugar biosynthesis; UDP-N-acetyl-alpha-D-glucosamine biosynthesis; UDP-N-acetyl-alpha-D-glucosamine from N-acetyl-alpha-D-glucosamine 1-phosphate: step 1/1. Its pathway is bacterial outer membrane biogenesis; LPS lipid A biosynthesis. Its function is as follows. Catalyzes the last two sequential reactions in the de novo biosynthetic pathway for UDP-N-acetylglucosamine (UDP-GlcNAc). The C-terminal domain catalyzes the transfer of acetyl group from acetyl coenzyme A to glucosamine-1-phosphate (GlcN-1-P) to produce N-acetylglucosamine-1-phosphate (GlcNAc-1-P), which is converted into UDP-GlcNAc by the transfer of uridine 5-monophosphate (from uridine 5-triphosphate), a reaction catalyzed by the N-terminal domain. The chain is Bifunctional protein GlmU from Acinetobacter baumannii (strain AYE).